The sequence spans 378 residues: Quinolinate synthase (378 aa).

Iminosuccinate contacts are provided by His-59 and Ser-80. Cys-125 is a [4Fe-4S] cluster binding site. Residues 151-153 (YAN) and Ser-168 each bind iminosuccinate. Residue Cys-212 coordinates [4Fe-4S] cluster. Iminosuccinate-binding positions include 238 to 240 (HPE) and Thr-255. Cys-309 lines the [4Fe-4S] cluster pocket.

It belongs to the quinolinate synthase family. Type 1 subfamily. Requires [4Fe-4S] cluster as cofactor.

Its subcellular location is the cytoplasm. The catalysed reaction is iminosuccinate + dihydroxyacetone phosphate = quinolinate + phosphate + 2 H2O + H(+). The protein operates within cofactor biosynthesis; NAD(+) biosynthesis; quinolinate from iminoaspartate: step 1/1. Its function is as follows. Catalyzes the condensation of iminoaspartate with dihydroxyacetone phosphate to form quinolinate. This chain is Quinolinate synthase, found in Burkholderia pseudomallei (strain 668).